The following is a 410-amino-acid chain: Translation initiation factor 2 subunit gamma (410 aa).

Positions Gln6 to Lys203 constitute a tr-type G domain. The G1 stretch occupies residues Gly15–Thr22. Residues Asp18, Thr22, Gly43, and Ser45 each contribute to the Mg(2+) site. Asp18–Ser23 contributes to the GTP binding site. The tract at residues Gly43–Arg47 is G2. Zn(2+) contacts are provided by Cys58, Cys61, Cys73, and Cys76. The interval Asp90 to Gly93 is G3. Residues Asn146–Asp149 and Ser181–His183 contribute to the GTP site. The G4 stretch occupies residues Asn146–Asp149. Residues Ser181–His183 form a G5 region.

The protein belongs to the TRAFAC class translation factor GTPase superfamily. Classic translation factor GTPase family. EIF2G subfamily. In terms of assembly, heterotrimer composed of an alpha, a beta and a gamma chain. Mg(2+) is required as a cofactor.

The catalysed reaction is GTP + H2O = GDP + phosphate + H(+). Functionally, eIF-2 functions in the early steps of protein synthesis by forming a ternary complex with GTP and initiator tRNA. The polypeptide is Translation initiation factor 2 subunit gamma (Methanococcus vannielii (strain ATCC 35089 / DSM 1224 / JCM 13029 / OCM 148 / SB)).